The following is an 85-amino-acid chain: Large ribosomal subunit protein bL27 (85 aa).

The interval 1–23 is disordered; sequence MAHKKAGGSSRNGRDSESKRLGV.

The protein belongs to the bacterial ribosomal protein bL27 family.

This chain is Large ribosomal subunit protein bL27, found in Methylococcus capsulatus (strain ATCC 33009 / NCIMB 11132 / Bath).